The chain runs to 484 residues: MKLEKIIKGITVNEIIGDASQEISGINMDSRLIEPGHIFVAVKGTQTDGHTYIQKAIEKGARTVVCENLPETLIENVTYIKVNDTEDVVGKLATTFYGDPTSKLELVGVTGTNGKTTIATLLYNMFRKFGYKTGLISTVCNYIDEEAIPTDHTTPDPITLNKLLGRMADEGCKYAFMEVSSHSVAQKRIGGLKFAGGIFTNLTRDHLDYHKTVENYLKAKKAFFDGLPKTAFALTNLDDKNGLVMTQNTKAKVHTYSLRSLSDFKGKVLEDGFEGMLLDINNVEVNVQFIGRFNASNLLAVYGAACLLGKKTEEVLLALSTLRPVAGRFDSLRSPKGYTAIVDYAHTPDALENVLNAIHEVLNGKGHVITVVGAGGNRDKGKRPLMAQEAVKQSDKVIITSDNPRFEEPQEIINDMLAGLTKEDMRKVISIADRKEAIRTACMLAQAKDVILVAGKGHENYQEIKGIKHHFDDKEVLRDIFANE.

A UDP-N-acetyl-alpha-D-muramoyl-L-alanyl-D-glutamate-binding site is contributed by Ser-30. Position 111 to 117 (111 to 117) interacts with ATP; the sequence is GTNGKTT. UDP-N-acetyl-alpha-D-muramoyl-L-alanyl-D-glutamate contacts are provided by residues 153 to 154, Ser-180, Gln-186, and Arg-188; that span reads TT. Lys-220 carries the N6-carboxylysine modification. Residues Arg-378, 402-405, Gly-455, and Glu-459 contribute to the meso-2,6-diaminopimelate site; that span reads DNPR. A Meso-diaminopimelate recognition motif motif is present at residues 402–405; the sequence is DNPR.

It belongs to the MurCDEF family. MurE subfamily. Mg(2+) serves as cofactor. In terms of processing, carboxylation is probably crucial for Mg(2+) binding and, consequently, for the gamma-phosphate positioning of ATP.

It is found in the cytoplasm. The enzyme catalyses UDP-N-acetyl-alpha-D-muramoyl-L-alanyl-D-glutamate + meso-2,6-diaminopimelate + ATP = UDP-N-acetyl-alpha-D-muramoyl-L-alanyl-gamma-D-glutamyl-meso-2,6-diaminopimelate + ADP + phosphate + H(+). It functions in the pathway cell wall biogenesis; peptidoglycan biosynthesis. Catalyzes the addition of meso-diaminopimelic acid to the nucleotide precursor UDP-N-acetylmuramoyl-L-alanyl-D-glutamate (UMAG) in the biosynthesis of bacterial cell-wall peptidoglycan. In Phocaeicola vulgatus (strain ATCC 8482 / DSM 1447 / JCM 5826 / CCUG 4940 / NBRC 14291 / NCTC 11154) (Bacteroides vulgatus), this protein is UDP-N-acetylmuramoyl-L-alanyl-D-glutamate--2,6-diaminopimelate ligase.